The sequence spans 634 residues: Growth hormone receptor (634 aa).

Residues 1 to 18 form the signal peptide; sequence MDLWQLLLTLAVAGSSDA. The Extracellular portion of the chain corresponds to 19–260; it reads FSGSEATPAF…NPSACEEDFQ (242 aa). Asn-46 carries an N-linked (GlcNAc...) asparagine glycan. An intrachain disulfide couples Cys-56 to Cys-66. An N-linked (GlcNAc...) asparagine glycan is attached at Asn-73. Cys-97 and Cys-108 are disulfide-bonded. Asn-111 carries an N-linked (GlcNAc...) asparagine glycan. The cysteines at positions 122 and 136 are disulfide-linked. The Fibronectin type-III domain occupies 147–250; it reads PPVGLNWTLL…EVLLITFPQM (104 aa). 3 N-linked (GlcNAc...) asparagine glycosylation sites follow: Asn-152, Asn-157, and Asn-196. Positions 236–240 match the WSXWS motif motif; that stretch reads YGKFS. The helical transmembrane segment at 261–284 threads the bilayer; the sequence is FPWFLIIIFGILGLTVTLFLLIFS. Residues 285 to 634 lie on the Cytoplasmic side of the membrane; sequence KQQRIKMLIL…STDQLNKIMP (350 aa). A required for JAK2 binding region spans residues 290 to 375; the sequence is KMLILPPVPV…HEKSLSIFGA (86 aa). Residues 293-301 carry the Box 1 motif motif; sequence ILPPVPVPK. The UbE motif signature appears at 336-345; sequence DSWVEFIELD. Ser-337 bears the Phosphoserine mark. The segment at 451 to 471 is disordered; sequence KPRPLPIGGTESTHQAVHTQL. A compositionally biased stretch (polar residues) spans 460-471; the sequence is TESTHQAVHTQL. Residues Tyr-483 and Tyr-591 each carry the phosphotyrosine modification.

Belongs to the type I cytokine receptor family. Type 1 subfamily. In terms of assembly, on growth hormone (GH) binding, forms homodimers and binds JAK2 via a box 1-containing domain. In terms of processing, the soluble form (GHBP) is produced by phorbol ester-promoted proteolytic cleavage at the cell surface (shedding) by ADAM17/TACE. Shedding is inhibited by growth hormone (GH) binding to the receptor probably due to a conformational change in GHR rendering the receptor inaccessible to ADAM17. On GH binding, phosphorylated on tyrosine residues in the cytoplasmic domain by JAK2. Post-translationally, ubiquitinated by the ECS(SOCS2) complex following ligand-binding and phosphorylation by JAK2, leading to its degradation by the proteasome. Regulation by the ECS(SOCS2) complex acts as a negative feedback loop of growth hormone receptor signaling. Ubiquitination is not sufficient for GHR internalization.

Its subcellular location is the cell membrane. The protein localises to the secreted. In terms of biological role, receptor for pituitary gland growth hormone (GH1) involved in regulating postnatal body growth. On ligand binding, couples to the JAK2/STAT5 pathway. Its function is as follows. The soluble form (GHBP) acts as a reservoir of growth hormone in plasma and may be a modulator/inhibitor of GH signaling. The polypeptide is Growth hormone receptor (GHR) (Ovis aries (Sheep)).